Consider the following 223-residue polypeptide: Ubiquitin carboxyl-terminal hydrolase isozyme L1 (223 aa).

M1 carries the post-translational modification N-acetylmethionine. A UCH catalytic domain is found at 2-221 (QLKPMEINPE…VRFSAVALCK (220 aa)). Positions 5 to 10 (PMEINP) are interaction with ubiquitin. Catalysis depends on C90, which acts as the Nucleophile. S125 bears the Phosphoserine mark. Catalysis depends on H161, which acts as the Proton donor. Residues 211–216 (EVRFSA) form an interaction with ubiquitin region. C220 carries S-farnesyl cysteine lipidation. Positions 221–223 (KAA) are cleaved as a propeptide — removed in mature form.

The protein belongs to the peptidase C12 family. Monomer. Homodimer. Interacts with COPS5 and SNCA. O-glycosylated. Expressed in the placenta at all stages of pregnancy. Expression increases as pregnancy progresses.

It localises to the cytoplasm. The protein resides in the endoplasmic reticulum membrane. Its subcellular location is the nucleus. It carries out the reaction Thiol-dependent hydrolysis of ester, thioester, amide, peptide and isopeptide bonds formed by the C-terminal Gly of ubiquitin (a 76-residue protein attached to proteins as an intracellular targeting signal).. Its function is as follows. Ubiquitin-protein hydrolase involved both in the processing of ubiquitin precursors and of ubiquitinated proteins. This enzyme is a thiol protease that recognizes and hydrolyzes a peptide bond at the C-terminal glycine of ubiquitin. Also binds to free monoubiquitin and may prevent its degradation in lysosomes. The homodimer may have ATP-independent ubiquitin ligase activity. This chain is Ubiquitin carboxyl-terminal hydrolase isozyme L1 (UCHL1), found in Macaca fascicularis (Crab-eating macaque).